We begin with the raw amino-acid sequence, 213 residues long: Orotate phosphoribosyltransferase (213 aa).

Lys26 contributes to the 5-phospho-alpha-D-ribose 1-diphosphate binding site. An orotate-binding site is contributed by 34-35 (FF). 5-phospho-alpha-D-ribose 1-diphosphate is bound by residues 72 to 73 (YK), Arg99, Lys100, Lys103, His105, and 124 to 132 (DDVITAGTA). 2 residues coordinate orotate: Thr128 and Arg156.

It belongs to the purine/pyrimidine phosphoribosyltransferase family. PyrE subfamily. Homodimer. Mg(2+) is required as a cofactor.

The catalysed reaction is orotidine 5'-phosphate + diphosphate = orotate + 5-phospho-alpha-D-ribose 1-diphosphate. The protein operates within pyrimidine metabolism; UMP biosynthesis via de novo pathway; UMP from orotate: step 1/2. Its function is as follows. Catalyzes the transfer of a ribosyl phosphate group from 5-phosphoribose 1-diphosphate to orotate, leading to the formation of orotidine monophosphate (OMP). This Aliivibrio fischeri (strain MJ11) (Vibrio fischeri) protein is Orotate phosphoribosyltransferase.